The primary structure comprises 413 residues: Metacaspase-1A (413 aa).

The disordered stretch occupies residues 1–104 (MQNHHHQQSS…PTDPVAFGHG (104 aa)). Pro residues predominate over residues 36–47 (SPQPGYGAPPPH). The segment covering 49 to 58 (GYGQPPSGYG) has biased composition (low complexity). Residues 75–85 (GMNQYQNTYSH) show a composition bias toward polar residues. Catalysis depends on residues His-204 and Cys-260.

It belongs to the peptidase C14B family.

Functionally, involved in cell death (apoptosis). Required for the apoptotic-like loss of membrane phospholipid asymmetry at stationary phase and facilitates growth under conditions of endoplasmic reticulum stress. The chain is Metacaspase-1A (casA) from Aspergillus fumigatus (strain CBS 144.89 / FGSC A1163 / CEA10) (Neosartorya fumigata).